A 331-amino-acid polypeptide reads, in one-letter code: Glycerol-3-phosphate dehydrogenase [NAD(P)+] (331 aa).

Residues Ser11, Phe12, Arg32, and Lys106 each contribute to the NADPH site. The sn-glycerol 3-phosphate site is built by Lys106, Gly134, and Ser136. Ala138 lines the NADPH pocket. Lys189, Asp242, Ser252, Arg253, and Asn254 together coordinate sn-glycerol 3-phosphate. The Proton acceptor role is filled by Lys189. Arg253 provides a ligand contact to NADPH. NADPH is bound by residues Val277 and Glu279.

It belongs to the NAD-dependent glycerol-3-phosphate dehydrogenase family.

Its subcellular location is the cytoplasm. The catalysed reaction is sn-glycerol 3-phosphate + NAD(+) = dihydroxyacetone phosphate + NADH + H(+). The enzyme catalyses sn-glycerol 3-phosphate + NADP(+) = dihydroxyacetone phosphate + NADPH + H(+). It functions in the pathway membrane lipid metabolism; glycerophospholipid metabolism. Catalyzes the reduction of the glycolytic intermediate dihydroxyacetone phosphate (DHAP) to sn-glycerol 3-phosphate (G3P), the key precursor for phospholipid synthesis. The chain is Glycerol-3-phosphate dehydrogenase [NAD(P)+] from Clostridium perfringens (strain SM101 / Type A).